Here is a 537-residue protein sequence, read N- to C-terminus: Chaperonin GroEL (537 aa).

ATP contacts are provided by residues 29–32, 86–90, Gly413, and Asp492; these read TLGP and DGTTT.

The protein belongs to the chaperonin (HSP60) family. In terms of assembly, forms a cylinder of 14 subunits composed of two heptameric rings stacked back-to-back. Interacts with the co-chaperonin GroES.

The protein resides in the cytoplasm. It carries out the reaction ATP + H2O + a folded polypeptide = ADP + phosphate + an unfolded polypeptide.. Its function is as follows. Together with its co-chaperonin GroES, plays an essential role in assisting protein folding. The GroEL-GroES system forms a nano-cage that allows encapsulation of the non-native substrate proteins and provides a physical environment optimized to promote and accelerate protein folding. This is Chaperonin GroEL from Dehalococcoides mccartyi (strain ATCC BAA-2266 / KCTC 15142 / 195) (Dehalococcoides ethenogenes (strain 195)).